Here is a 224-residue protein sequence, read N- to C-terminus: tRNA (guanine-N(7)-)-methyltransferase (224 aa).

Positions 54, 79, 106, and 129 each coordinate S-adenosyl-L-methionine. Asp129 is an active-site residue. The substrate site is built by Lys133 and Asp165.

Belongs to the class I-like SAM-binding methyltransferase superfamily. TrmB family.

The enzyme catalyses guanosine(46) in tRNA + S-adenosyl-L-methionine = N(7)-methylguanosine(46) in tRNA + S-adenosyl-L-homocysteine. The protein operates within tRNA modification; N(7)-methylguanine-tRNA biosynthesis. In terms of biological role, catalyzes the formation of N(7)-methylguanine at position 46 (m7G46) in tRNA. The sequence is that of tRNA (guanine-N(7)-)-methyltransferase from Chlamydia caviae (strain ATCC VR-813 / DSM 19441 / 03DC25 / GPIC) (Chlamydophila caviae).